Consider the following 123-residue polypeptide: Small ribosomal subunit protein uS12 (123 aa).

Residue Asp-89 is modified to 3-methylthioaspartic acid.

This sequence belongs to the universal ribosomal protein uS12 family. In terms of assembly, part of the 30S ribosomal subunit. Contacts proteins S8 and S17. May interact with IF1 in the 30S initiation complex.

Functionally, with S4 and S5 plays an important role in translational accuracy. Its function is as follows. Interacts with and stabilizes bases of the 16S rRNA that are involved in tRNA selection in the A site and with the mRNA backbone. Located at the interface of the 30S and 50S subunits, it traverses the body of the 30S subunit contacting proteins on the other side and probably holding the rRNA structure together. The combined cluster of proteins S8, S12 and S17 appears to hold together the shoulder and platform of the 30S subunit. The chain is Small ribosomal subunit protein uS12 from Rhodopseudomonas palustris (strain BisA53).